Consider the following 85-residue polypeptide: Large ribosomal subunit protein bL27 (85 aa).

The segment at 1 to 20 is disordered; sequence MATKKAGGSTRNGRDSEAKR.

This sequence belongs to the bacterial ribosomal protein bL27 family.

The chain is Large ribosomal subunit protein bL27 from Haemophilus influenzae (strain ATCC 51907 / DSM 11121 / KW20 / Rd).